A 143-amino-acid chain; its full sequence is Large ribosomal subunit protein uL11 (143 aa).

Belongs to the universal ribosomal protein uL11 family. In terms of assembly, part of the ribosomal stalk of the 50S ribosomal subunit. Interacts with L10 and the large rRNA to form the base of the stalk. L10 forms an elongated spine to which L12 dimers bind in a sequential fashion forming a multimeric L10(L12)X complex. In terms of processing, one or more lysine residues are methylated.

Functionally, forms part of the ribosomal stalk which helps the ribosome interact with GTP-bound translation factors. The chain is Large ribosomal subunit protein uL11 from Ralstonia nicotianae (strain ATCC BAA-1114 / GMI1000) (Ralstonia solanacearum).